The primary structure comprises 181 residues: Isopentenyl-diphosphate Delta-isomerase (181 aa).

Mn(2+)-binding residues include His-25 and His-32. The Nudix hydrolase domain occupies 30–164 (PLHLAFSCWL…PWAFSPWMVM (135 aa)). Residue Cys-67 is part of the active site. A Mn(2+)-binding site is contributed by His-69. A Mg(2+)-binding site is contributed by Glu-87. Glu-114 and Glu-116 together coordinate Mn(2+). Glu-116 is a catalytic residue.

This sequence belongs to the IPP isomerase type 1 family. In terms of assembly, homodimer. Requires Mg(2+) as cofactor. Mn(2+) serves as cofactor.

The protein resides in the cytoplasm. It carries out the reaction isopentenyl diphosphate = dimethylallyl diphosphate. Its pathway is isoprenoid biosynthesis; dimethylallyl diphosphate biosynthesis; dimethylallyl diphosphate from isopentenyl diphosphate: step 1/1. Its function is as follows. Catalyzes the 1,3-allylic rearrangement of the homoallylic substrate isopentenyl (IPP) to its highly electrophilic allylic isomer, dimethylallyl diphosphate (DMAPP). The protein is Isopentenyl-diphosphate Delta-isomerase of Salmonella paratyphi B (strain ATCC BAA-1250 / SPB7).